Consider the following 145-residue polypeptide: 3-dehydroquinate dehydratase (145 aa).

The active-site Proton acceptor is the tyrosine 22. Residues asparagine 71, histidine 77, and aspartate 84 each contribute to the substrate site. The active-site Proton donor is histidine 97. Residues 98 to 99 (LS) and arginine 108 contribute to the substrate site.

This sequence belongs to the type-II 3-dehydroquinase family. In terms of assembly, homododecamer.

It carries out the reaction 3-dehydroquinate = 3-dehydroshikimate + H2O. It participates in metabolic intermediate biosynthesis; chorismate biosynthesis; chorismate from D-erythrose 4-phosphate and phosphoenolpyruvate: step 3/7. Functionally, catalyzes a trans-dehydration via an enolate intermediate. In Francisella tularensis subsp. tularensis (strain WY96-3418), this protein is 3-dehydroquinate dehydratase.